A 193-amino-acid chain; its full sequence is Large ribosomal subunit protein uL18 (193 aa).

This sequence belongs to the universal ribosomal protein uL18 family. In terms of assembly, part of the 50S ribosomal subunit. Contacts the 5S and 23S rRNAs.

In terms of biological role, this is one of the proteins that bind and probably mediate the attachment of the 5S RNA into the large ribosomal subunit, where it forms part of the central protuberance. This is Large ribosomal subunit protein uL18 from Methanococcus maripaludis (strain C5 / ATCC BAA-1333).